Consider the following 291-residue polypeptide: 4-hydroxy-tetrahydrodipicolinate synthase (291 aa).

Thr44 contacts pyruvate. The Proton donor/acceptor role is filled by Tyr132. Residue Lys160 is the Schiff-base intermediate with substrate of the active site. Residue Ile202 participates in pyruvate binding.

This sequence belongs to the DapA family. Homotetramer; dimer of dimers.

The protein localises to the cytoplasm. The catalysed reaction is L-aspartate 4-semialdehyde + pyruvate = (2S,4S)-4-hydroxy-2,3,4,5-tetrahydrodipicolinate + H2O + H(+). The protein operates within amino-acid biosynthesis; L-lysine biosynthesis via DAP pathway; (S)-tetrahydrodipicolinate from L-aspartate: step 3/4. Functionally, catalyzes the condensation of (S)-aspartate-beta-semialdehyde [(S)-ASA] and pyruvate to 4-hydroxy-tetrahydrodipicolinate (HTPA). This chain is 4-hydroxy-tetrahydrodipicolinate synthase, found in Sphingopyxis alaskensis (strain DSM 13593 / LMG 18877 / RB2256) (Sphingomonas alaskensis).